The sequence spans 238 residues: Probable transcriptional regulatory protein CAB166 (238 aa).

Belongs to the TACO1 family.

It localises to the cytoplasm. This is Probable transcriptional regulatory protein CAB166 from Chlamydia abortus (strain DSM 27085 / S26/3) (Chlamydophila abortus).